The following is a 192-amino-acid chain: VQ motif-containing protein 22 (192 aa).

Low complexity predominate over residues 24-38 (ASTAVTTTTAGDTTS). The interval 24–65 (ASTAVTTTTAGDTTSIDSRLSPETGRVTKPTRRRSRASRRTP) is disordered. The span at 52–62 (KPTRRRSRASR) shows a compositional bias: basic residues. The short motif at 76-85 (FRAMVQQYTG) is the VQ element. 2 disordered regions span residues 101–135 (FSLTSSSDPSAGSSQQAPWQYNFQPHAPLQPPQRP) and 163–192 (FGTVDGSGGGGSAPSSKEATNSNSSSSRLQ). 2 stretches are compositionally biased toward low complexity: residues 102–114 (SLTSSSDPSAGSS) and 175–192 (APSSKEATNSNSSSSRLQ).

The protein localises to the nucleus. Its function is as follows. May function as positive regulator of plant growth. This chain is VQ motif-containing protein 22, found in Arabidopsis thaliana (Mouse-ear cress).